The following is a 184-amino-acid chain: Mitochondrial translation release factor in rescue (184 aa).

The N-terminal 98 residues, 1–98, are a transit peptide targeting the mitochondrion; the sequence is MSSRSTWALL…HVPSGIVVKC (98 aa). The GGQ domain stretch occupies residues 60–124; that stretch reads ESELEEQFVK…LQEKVDVFYN (65 aa). Residues 74 to 76 carry the GGQ motif; the sequence is GGQ. Gln76 carries the post-translational modification N5-methylglutamine. The stretch at 130–178 forms a coiled coil; sequence VHKEKLEAERRKRERKKRAKETLEKKKLLKELREASQNITEKKADADGI. The segment at 132 to 184 is disordered; that stretch reads KEKLEAERRKRERKKRAKETLEKKKLLKELREASQNITEKKADADGIPRGFQE. The span at 149–184 shows a compositional bias: basic and acidic residues; sequence KETLEKKKLLKELREASQNITEKKADADGIPRGFQE.

It belongs to the prokaryotic/mitochondrial release factor family. In terms of assembly, interacts (via C-terminus) with MTRES1 (via S4 domain). Associates with mitoribosomal S39 large subunit, peptidyl tRNA and nascent chain. Methylation of glutamine in the GGQ triplet by HEMK1.

Its subcellular location is the mitochondrion. Functionally, part of a mitoribosome-associated quality control pathway that prevents aberrant translation by responding to interruptions during elongation. As heterodimer with MTRES1, ejects the unfinished nascent chain and peptidyl transfer RNA (tRNA), respectively, from stalled ribosomes. Recruitment of mitoribosome biogenesis factors to these quality control intermediates suggests additional roles for MTRES1 and MTRF during mitoribosome rescue. The polypeptide is Mitochondrial translation release factor in rescue (Mus musculus (Mouse)).